Consider the following 3242-residue polypeptide: tRNA nuclease CdiA (3242 aa).

The signal sequence occupies residues 1–32; it reads MHQPPVRFTYRLLSYLISTIIAGQPLLPAVGA. The interval 36-322 is two-partner system transport domain (TPS); that stretch reads PQNGAGMDKA…AGGNLSVTGT (287 aa). The tract at residues 351–1376 is FHA-1; that stretch reads GELTAGQNAM…IVVRTGHLLN (1026 aa). Residues 1377 to 1668 are receptor-binding domain (RBD); it reads QREGFSATTT…TGQTGISDDW (292 aa). The interval 1668-1852 is YP domain; sequence WPLPSGNNGY…LSPEDITLHN (185 aa). Residues 1853-1913 are periplasmic FHA-1 repeat (pFR); it reads GSVISGNNVQ…DLSAIGDISN (61 aa). The interval 2021 to 2631 is FHA-2; the sequence is DNSASSTTSQ…TSKYDSKQTS (611 aa). Basic and acidic residues predominate over residues 2075-2091; that stretch reads RESKNSRNGRSESHESH. Disordered stretches follow at residues 2075-2094, 2310-2333, and 2439-2481; these read RESKNSRNGRSESHESHAAV, GSSKTTHDRREAGTTQSQSASTIG, and TMAS…NAGN. Residues 2322-2333 show a composition bias toward polar residues; it reads GTTQSQSASTIG. Residues 2969-3242 are DUF638-CT domain; not toxic when added to the outside of E.coli, does not interfere with F-pilus mediated conjugation, toxic when expressed intracellularly; sequence GVDPSKLTED…IESALKGYGI (274 aa). A pre-toxin (PT) domain region spans residues 2972 to 3015; the sequence is PSKLTEDQKQTVSTLATLSAGMAGGIASGDVAGAAAGAGAGKNV. The VENN CT cleavage motif motif lies at 3016–3019; it reads VENN. The segment at 3016 to 3097 is toxin import domain; sufficient to import the tRNA nuclease domain of colicin E5 into E.coli, may bind F-pili; sequence VENNALSLVA…KYLSSLHDKY (82 aa). The interval 3016 to 3242 is CT domain; toxic when added to the outside of E.coli and when expressed intracellularly; the sequence is VENNALSLVA…IESALKGYGI (227 aa). Residues 3020–3141 are inner membrane translocation domain (IMTD), targets protein to FtsH; the sequence is ALSLVARGCA…SENDPKQQNE (122 aa). The tract at residues 3020–3242 is C-terminal effector domain (CT); it reads ALSLVARGCA…IESALKGYGI (223 aa). The tract at residues 3098 to 3242 is tRNase function, does not interfere with F-pilus mediated conjugation; sequence GSGAASNPNI…IESALKGYGI (145 aa). The tract at residues 3116 to 3146 is disordered; it reads KVELGGSGSGTGTPPPSENDPKQQNEKTVDK. Residues 3134–3146 show a composition bias toward basic and acidic residues; the sequence is NDPKQQNEKTVDK. Residues 3137–3238 are a coiled coil; the sequence is KQQNEKTVDK…AINKIESALK (102 aa). Residues D3170, H3193, and E3196 contribute to the active site.

This sequence in the N-terminal section; belongs to the CdiA toxin family. The C-terminal (CT) domain interacts with cognate CdiI but not non-cognate CdiI from D.dadantii strain 3937. CdiA-CT also interacts with CysK; this is blocked upon preincubation with O-acetyl-L-serine. CysK forms a complex with CdiA-CT/CdiI. One CdiA toxin subunit binds to each subunit of the CysK homodimer, and one CdiI immunity protein binds to each toxin subunit; the immune complex is thus a dimer of trimers. The 4 C-terminal residues of CdiA fit into the active site of CysK. A divalent metal cation serves as cofactor.

It is found in the secreted. The protein resides in the target cell membrane. The protein localises to the target cell. It localises to the target cell cytoplasm. Functionally, toxic component of a toxin-immunity protein module, which functions as a cellular contact-dependent growth inhibition (CDI) system. CDI modules allow bacteria to communicate with and inhibit the growth of closely related neighboring bacteria in a contact-dependent fashion (target cell counts decrease 100- to 1000-fold). CdiA toxicity is neutralized by its cognate immunity protein CdiI, but not by CdiI from other bacteria. Uses heterotrimeric OmpC and OmpF as target cell outer membrane receptors; receptor function depends on polymorphisms in extracellular loops L4 and L5 of OmpC; interacts with itself and closely related bacteria but also with OmpC from E.cloacae ATCC 13047. Its ability to preferentially bind to 'self' receptors suggests it may also play a role in self-recognition and kin selection. A bamA mutation that decreases its expression about 5-fold is partially resistant to this strain of CdiA, probably due to decreased outer membrane receptor protein assembly. Isolated CdiA-CT is imported in an F-pilus-mediated fashion; CdiA-CT inhibits F-mediated conjugation, probably via its N-terminus (residues 3016-3097), although it is not clear if this is physiologically significant. Gains access to the cytoplasm of target cells by using integral inner membrane protein FtsH. The C-terminal domain (CT) cleaves within tRNA anticodon loops; this activity is inhibited by cognate CdiI. tRNase activity of CdiA-CT is stimulated by CysK, although the extreme C-terminus (residues 3098-3242) has tRNase activity in the absence of CysK. In vivo CDI toxicity requires CysK. CysK stabilizes CdiA-CT, allowing it to bind tRNA substrate; neither CdiA-CT nor CysK bind tRNA alone in vitro. Purified CdiA-CT (residues 3016-3242) inhibits E.coli cell growth when added to cultures alone or in complex with cognate CdiI, growth is inhibited when cognate CdiI is present within the cell but not when a CdiA-CT/CdiI complex is added extracellularly, suggesting CdiA-CT alone but not the CdiA-CT/CdiI complex is imported into the target cell. In terms of biological role, the CdiA protein is thought to be exported from the cell through the central lumen of CdiB, the other half of its two-partner system (TPS). The TPS domain probably remains associated with CdiB while the FHA-1 domain forms an extended filament with the receptor-binding domain (RBD) at its extremity; in the secretion arrested state the C-terminus of the RBD and YP domains form a hairpin-like structure as the FHA-2, PT and CT domains are periplasmic. The YP domain is probably responsible for this arrest at the point where it re-enters the host cell periplasm. Upon binding to a target cell outer membrane receptor (heterotrimeric OmpC-OmpF for this CDI) a signal is transmitted to activate secretion. The filament elongates slightly, the rest of CdiA is secreted and the FHA-2 domain becomes stably associated with the target cell's outer membrane where it facilitates entry of the toxic CT domain into the target cell periplasm. From there the toxic CT domain is cleaved and gains access to the target cell cytoplasm via an inner membrane protein (FtsH for this CDI). The protein is tRNA nuclease CdiA of Escherichia coli O6:K15:H31 (strain 536 / UPEC).